We begin with the raw amino-acid sequence, 243 residues long: tRNA1(Val) (adenine(37)-N6)-methyltransferase (243 aa).

Belongs to the methyltransferase superfamily. tRNA (adenine-N(6)-)-methyltransferase family.

The protein resides in the cytoplasm. The enzyme catalyses adenosine(37) in tRNA1(Val) + S-adenosyl-L-methionine = N(6)-methyladenosine(37) in tRNA1(Val) + S-adenosyl-L-homocysteine + H(+). Its function is as follows. Specifically methylates the adenine in position 37 of tRNA(1)(Val) (anticodon cmo5UAC). This Shewanella loihica (strain ATCC BAA-1088 / PV-4) protein is tRNA1(Val) (adenine(37)-N6)-methyltransferase.